We begin with the raw amino-acid sequence, 64 residues long: Large ribosomal subunit protein bL35 (64 aa).

A compositionally biased stretch (basic residues) spans 1–26; the sequence is MPKMKTKSAAAKRFKTTKSGKIKRKQ. The interval 1 to 46 is disordered; that stretch reads MPKMKTKSAAAKRFKTTKSGKIKRKQAYTSHLAPNKTTKQKRHLRK.

The protein belongs to the bacterial ribosomal protein bL35 family.

The protein is Large ribosomal subunit protein bL35 of Mycoplasmoides gallisepticum (strain R(low / passage 15 / clone 2)) (Mycoplasma gallisepticum).